Reading from the N-terminus, the 617-residue chain is MAFLQISEPGQSAAPHQHKLAVGIDLGTTNSLVASVRSGEANTLPDMKGNVILPSVVQYQDDKICVGANAYQSAASDPQNTIISVKRLMGRSLKDIQTRYPDLPYQFTESDNGLPVIHTTQGDVNPIQVSAEILKSLSNRAEVTLGGSLEGVVITVPAYFDDAQRAGTKDAATLAGLNVLRLLNEPTAAAIAYGLDSGQEGIIAVYDLGGGTFDISILRLSKGVFEVLATGGDSALGGDDFDHVLSQWIKDQAEITTALSNQEQRELLTLATETKVALSDADSVTVSFKEWSGTITADIFNQLIQSLVKKTLMACRRALKDADISSEDVMEVVMVGGSTRTPIVRRSVGDYFAKTPLTSIDPDQVVAIGAAIQADILVGNKPDTEMLLLDVIPLSLGIETMGGLVEKIIPRNTTIPVAKAQEFTTFKDGQTGMMVHVVQGEREMVEDGRSLARFSLKGIPPMTAGAAHIRVTYQVDADGLLSVTAMEKSTGVQSHIQVKPSYGLSDNEVATMLKDSMTYAKDDMKARALAEQQVEADRVIEGLVVALNNDGDALLSKEEQTVILQAVEALITVRKGTDTQAIEDGIKHADEASQEFAARRMDASIRAALAGQSIDEV.

This sequence belongs to the heat shock protein 70 family.

In terms of biological role, chaperone involved in the maturation of iron-sulfur cluster-containing proteins. Has a low intrinsic ATPase activity which is markedly stimulated by HscB. This Aliivibrio salmonicida (strain LFI1238) (Vibrio salmonicida (strain LFI1238)) protein is Chaperone protein HscA homolog.